Here is a 102-residue protein sequence, read N- to C-terminus: Small ribosomal subunit protein eS24 (102 aa).

It belongs to the eukaryotic ribosomal protein eS24 family.

The protein is Small ribosomal subunit protein eS24 of Methanococcus maripaludis (strain C7 / ATCC BAA-1331).